The chain runs to 441 residues: Ribulose bisphosphate carboxylase large chain (441 aa).

The residue at position 5 (lysine 5) is an N6,N6,N6-trimethyllysine. Positions 114 and 164 each coordinate substrate. Residue lysine 166 is the Proton acceptor of the active site. Lysine 168 serves as a coordination point for substrate. Positions 192, 194, and 195 each coordinate Mg(2+). The residue at position 192 (lysine 192) is an N6-carboxylysine. Histidine 285 serves as the catalytic Proton acceptor. The substrate site is built by arginine 286, histidine 318, and serine 370.

This sequence belongs to the RuBisCO large chain family. Type I subfamily. As to quaternary structure, heterohexadecamer of 8 large chains and 8 small chains; disulfide-linked. The disulfide link is formed within the large subunit homodimers. Requires Mg(2+) as cofactor. In terms of processing, the disulfide bond which can form in the large chain dimeric partners within the hexadecamer appears to be associated with oxidative stress and protein turnover.

It localises to the plastid. The protein localises to the chloroplast. The enzyme catalyses 2 (2R)-3-phosphoglycerate + 2 H(+) = D-ribulose 1,5-bisphosphate + CO2 + H2O. It carries out the reaction D-ribulose 1,5-bisphosphate + O2 = 2-phosphoglycolate + (2R)-3-phosphoglycerate + 2 H(+). RuBisCO catalyzes two reactions: the carboxylation of D-ribulose 1,5-bisphosphate, the primary event in carbon dioxide fixation, as well as the oxidative fragmentation of the pentose substrate in the photorespiration process. Both reactions occur simultaneously and in competition at the same active site. The protein is Ribulose bisphosphate carboxylase large chain of Glycyrrhiza echinata (Licorice).